The primary structure comprises 427 residues: Serine hydroxymethyltransferase (427 aa).

(6S)-5,6,7,8-tetrahydrofolate-binding positions include L118 and 122 to 124 (GHL). The residue at position 227 (K227) is an N6-(pyridoxal phosphate)lysine. (6S)-5,6,7,8-tetrahydrofolate contacts are provided by residues E243 and 351-353 (SPF).

The protein belongs to the SHMT family. As to quaternary structure, homodimer. Pyridoxal 5'-phosphate is required as a cofactor.

The protein resides in the cytoplasm. The enzyme catalyses (6R)-5,10-methylene-5,6,7,8-tetrahydrofolate + glycine + H2O = (6S)-5,6,7,8-tetrahydrofolate + L-serine. Its pathway is one-carbon metabolism; tetrahydrofolate interconversion. The protein operates within amino-acid biosynthesis; glycine biosynthesis; glycine from L-serine: step 1/1. Its function is as follows. Catalyzes the reversible interconversion of serine and glycine with tetrahydrofolate (THF) serving as the one-carbon carrier. This reaction serves as the major source of one-carbon groups required for the biosynthesis of purines, thymidylate, methionine, and other important biomolecules. Also exhibits THF-independent aldolase activity toward beta-hydroxyamino acids, producing glycine and aldehydes, via a retro-aldol mechanism. The chain is Serine hydroxymethyltransferase from Thermotoga neapolitana (strain ATCC 49049 / DSM 4359 / NBRC 107923 / NS-E).